We begin with the raw amino-acid sequence, 414 residues long: Tyrosine--tRNA ligase (414 aa).

Residue tyrosine 35 participates in L-tyrosine binding. The short motif at 40-49 (PTADSLHVGH) is the 'HIGH' region element. L-tyrosine is bound by residues tyrosine 164 and glutamine 168. The short motif at 226–230 (KFGKT) is the 'KMSKS' region element. Residue lysine 229 participates in ATP binding. The S4 RNA-binding domain occupies 347–414 (TKVIDALVEL…KKKYFVILVK (68 aa)).

Belongs to the class-I aminoacyl-tRNA synthetase family. TyrS type 1 subfamily. Homodimer.

The protein resides in the cytoplasm. The catalysed reaction is tRNA(Tyr) + L-tyrosine + ATP = L-tyrosyl-tRNA(Tyr) + AMP + diphosphate + H(+). Functionally, catalyzes the attachment of tyrosine to tRNA(Tyr) in a two-step reaction: tyrosine is first activated by ATP to form Tyr-AMP and then transferred to the acceptor end of tRNA(Tyr). The protein is Tyrosine--tRNA ligase of Mycoplasma capricolum subsp. capricolum (strain California kid / ATCC 27343 / NCTC 10154).